A 465-amino-acid polypeptide reads, in one-letter code: Argininosuccinate lyase (465 aa).

The protein belongs to the lyase 1 family. Argininosuccinate lyase subfamily.

It is found in the cytoplasm. It catalyses the reaction 2-(N(omega)-L-arginino)succinate = fumarate + L-arginine. It participates in amino-acid biosynthesis; L-arginine biosynthesis; L-arginine from L-ornithine and carbamoyl phosphate: step 3/3. The polypeptide is Argininosuccinate lyase (Deinococcus geothermalis (strain DSM 11300 / CIP 105573 / AG-3a)).